We begin with the raw amino-acid sequence, 172 residues long: Pollen-specific protein-like At4g18596 (172 aa).

A signal peptide spans 1–27 (MASKAIFFFFVSAVCLSSLAGVAIADA). Cystine bridges form between cysteine 41/cysteine 112, cysteine 44/cysteine 157, and cysteine 65/cysteine 100. Residue asparagine 70 is glycosylated (N-linked (GlcNAc...) asparagine).

It belongs to the Ole e I family.

Its subcellular location is the secreted. This chain is Pollen-specific protein-like At4g18596, found in Arabidopsis thaliana (Mouse-ear cress).